The sequence spans 1080 residues: uncharacterized protein (1080 aa).

Residues 1-17 (MHKLLVIIAHIIVCAYA) form the signal peptide. The Extracellular portion of the chain corresponds to 18–1042 (DFTGFDNEAG…KSLDLEMIGK (1025 aa)). Residues Asn-439, Asn-664, and Asn-875 are each glycosylated (N-linked (GlcNAc...) asparagine; by host). Residues 1043 to 1063 (IILLIAFVIVFVILLTIGIIT) form a helical membrane-spanning segment. Topologically, residues 1064–1080 (LVKRHRETLPEDEYLLP) are cytoplasmic.

It is found in the host membrane. This is an uncharacterized protein from Ostreid herpesvirus 1 (isolate France) (OsHV-1).